Consider the following 84-residue polypeptide: RNA-binding protein Hfq (84 aa).

Residues 9 to 68 (DPYLNTLRKERVPVSIYLVNGIKLQGQIESFDQFVILLKNTVSQMVYKHAISTVVPSRPV) enclose the Sm domain.

This sequence belongs to the Hfq family. In terms of assembly, homohexamer.

Its function is as follows. RNA chaperone that binds small regulatory RNA (sRNAs) and mRNAs to facilitate mRNA translational regulation in response to envelope stress, environmental stress and changes in metabolite concentrations. Also binds with high specificity to tRNAs. The protein is RNA-binding protein Hfq of Azotobacter vinelandii (strain DJ / ATCC BAA-1303).